A 356-amino-acid polypeptide reads, in one-letter code: S-adenosylmethionine:tRNA ribosyltransferase-isomerase (356 aa).

This sequence belongs to the QueA family. As to quaternary structure, monomer.

Its subcellular location is the cytoplasm. It catalyses the reaction 7-aminomethyl-7-carbaguanosine(34) in tRNA + S-adenosyl-L-methionine = epoxyqueuosine(34) in tRNA + adenine + L-methionine + 2 H(+). The protein operates within tRNA modification; tRNA-queuosine biosynthesis. Transfers and isomerizes the ribose moiety from AdoMet to the 7-aminomethyl group of 7-deazaguanine (preQ1-tRNA) to give epoxyqueuosine (oQ-tRNA). This chain is S-adenosylmethionine:tRNA ribosyltransferase-isomerase, found in Shigella boydii serotype 4 (strain Sb227).